The primary structure comprises 205 residues: Mediator of RNA polymerase II transcription subunit 29 (205 aa).

A compositionally biased stretch (low complexity) spans 1–27 (MNPNMNMMQMSGPPMMQVSPMMQSSPQ). The segment at 1 to 65 (MNPNMNMMQM…QQQQQQAEKL (65 aa)) is disordered. Positions 28 to 38 (PMMPTGPPGPV) are enriched in pro residues. Over residues 39 to 61 (PMQQQHQQQQQQQQQQQQQQQQQ) the composition is skewed to low complexity.

Belongs to the Mediator complex subunit 29 family. Component of the Mediator complex.

The protein localises to the nucleus. Its function is as follows. Component of the Mediator complex, a coactivator involved in the regulated transcription of nearly all RNA polymerase II-dependent genes. Mediator functions as a bridge to convey information from gene-specific regulatory proteins to the basal RNA polymerase II transcription machinery. Mediator is recruited to promoters by direct interactions with regulatory proteins and serves as a scaffold for the assembly of a functional preinitiation complex with RNA polymerase II and the general transcription factors. The sequence is that of Mediator of RNA polymerase II transcription subunit 29 (ix) from Drosophila virilis (Fruit fly).